We begin with the raw amino-acid sequence, 391 residues long: Formate-dependent phosphoribosylglycinamide formyltransferase (391 aa).

N(1)-(5-phospho-beta-D-ribosyl)glycinamide-binding positions include 20–21 (EL) and glutamate 80. Residues arginine 112, lysine 153, 158–163 (SSGKGQ), 193–196 (EGFV), and glutamate 201 contribute to the ATP site. An ATP-grasp domain is found at 117 to 306 (RLAAEELQLP…EFALHVRAFT (190 aa)). Residues glutamate 265 and glutamate 277 each coordinate Mg(2+). Residues aspartate 284, lysine 354, and 361 to 362 (RR) each bind N(1)-(5-phospho-beta-D-ribosyl)glycinamide.

Belongs to the PurK/PurT family. In terms of assembly, homodimer.

The enzyme catalyses N(1)-(5-phospho-beta-D-ribosyl)glycinamide + formate + ATP = N(2)-formyl-N(1)-(5-phospho-beta-D-ribosyl)glycinamide + ADP + phosphate + H(+). It participates in purine metabolism; IMP biosynthesis via de novo pathway; N(2)-formyl-N(1)-(5-phospho-D-ribosyl)glycinamide from N(1)-(5-phospho-D-ribosyl)glycinamide (formate route): step 1/1. Its function is as follows. Involved in the de novo purine biosynthesis. Catalyzes the transfer of formate to 5-phospho-ribosyl-glycinamide (GAR), producing 5-phospho-ribosyl-N-formylglycinamide (FGAR). Formate is provided by PurU via hydrolysis of 10-formyl-tetrahydrofolate. This chain is Formate-dependent phosphoribosylglycinamide formyltransferase, found in Aliivibrio fischeri (strain ATCC 700601 / ES114) (Vibrio fischeri).